The primary structure comprises 297 residues: Probable endonuclease 4 (297 aa).

Zn(2+) contacts are provided by His69, His110, Glu145, Asp179, His182, His214, Asp227, His229, and Glu259.

It belongs to the AP endonuclease 2 family. It depends on Zn(2+) as a cofactor.

The enzyme catalyses Endonucleolytic cleavage to 5'-phosphooligonucleotide end-products.. Endonuclease IV plays a role in DNA repair. It cleaves phosphodiester bonds at apurinic or apyrimidinic (AP) sites, generating a 3'-hydroxyl group and a 5'-terminal sugar phosphate. The polypeptide is Probable endonuclease 4 (Oceanobacillus iheyensis (strain DSM 14371 / CIP 107618 / JCM 11309 / KCTC 3954 / HTE831)).